The following is an 87-amino-acid chain: DNA-directed RNA polymerase subunit Rpo5 (87 aa).

The protein belongs to the archaeal Rpo5/eukaryotic RPB5 RNA polymerase subunit family. As to quaternary structure, part of the RNA polymerase complex.

It is found in the cytoplasm. It carries out the reaction RNA(n) + a ribonucleoside 5'-triphosphate = RNA(n+1) + diphosphate. DNA-dependent RNA polymerase (RNAP) catalyzes the transcription of DNA into RNA using the four ribonucleoside triphosphates as substrates. The chain is DNA-directed RNA polymerase subunit Rpo5 from Thermoplasma volcanium (strain ATCC 51530 / DSM 4299 / JCM 9571 / NBRC 15438 / GSS1).